The following is a 684-amino-acid chain: Glycine--tRNA ligase beta subunit (684 aa).

It belongs to the class-II aminoacyl-tRNA synthetase family. In terms of assembly, tetramer of two alpha and two beta subunits.

It is found in the cytoplasm. The enzyme catalyses tRNA(Gly) + glycine + ATP = glycyl-tRNA(Gly) + AMP + diphosphate. The polypeptide is Glycine--tRNA ligase beta subunit (Pseudomonas savastanoi pv. phaseolicola (strain 1448A / Race 6) (Pseudomonas syringae pv. phaseolicola (strain 1448A / Race 6))).